Consider the following 500-residue polypeptide: Maturase K (500 aa).

Belongs to the intron maturase 2 family. MatK subfamily.

It localises to the plastid. It is found in the chloroplast. In terms of biological role, usually encoded in the trnK tRNA gene intron. Probably assists in splicing its own and other chloroplast group II introns. The protein is Maturase K of Proboscidea louisianica (Louisiana Devil's-claw).